Here is a 927-residue protein sequence, read N- to C-terminus: Clumping factor A (927 aa).

The N-terminal stretch at 1–39 (MNMKKKEKHAIRKKSIGVASVLVGTLIGFGLLSSKEADA) is a signal peptide. A YSIRK-G/S signaling motif motif is present at residues 9–20 (HAIRKKSIGVAS). 2 disordered regions span residues 34 to 200 (SKEA…SNKD) and 529 to 898 (FNNG…SEDE). The segment at 40–542 (SENSVTQSDS…SGSGDGIDKP (503 aa)) is ligand binding A region. The span at 47 to 65 (SDSASNESKSNDSSSVSAA) shows a compositional bias: low complexity. The segment covering 71-105 (TNVSDTKTSSNTNNGETSVAQNPAQQETTQSSSTN) has biased composition (polar residues). Composition is skewed to low complexity over residues 106–132 (ATTE…ATTQ) and 143–162 (NQTS…SVNS). Residues 163–200 (PQNSTNAENVSTTQDTSTEATPSNNESAPQSTDASNKD) are compositionally biased toward polar residues. Over residues 547-565 (QPDEPGEIEPIPEDSDSDP) the composition is skewed to acidic residues. Over residues 566–598 (GSDSGSDSNSDSGSDSGSDSTSDSGSDSASDSD) the composition is skewed to low complexity. Acidic residues predominate over residues 599–855 (SASDSDSASD…DSDSESDSNS (257 aa)). Residues 856 to 867 (DSESVSNNNVVP) are compositionally biased toward low complexity. Positions 881–890 (NEAKDSKEPL) are enriched in basic and acidic residues. An LPXTG sorting signal motif is present at residues 890–894 (LPDTG). Thr-893 is subject to Pentaglycyl murein peptidoglycan amidated threonine. Residues 894 to 927 (GSEDEANTSLIWGLLASIGSLLLFRRKKENKDKK) constitute a propeptide, removed by sortase.

The protein belongs to the serine-aspartate repeat-containing protein (SDr) family.

The protein resides in the secreted. It is found in the cell wall. In terms of biological role, cell surface-associated protein implicated in virulence. Promotes bacterial attachment exclusively to the gamma-chain of human fibrinogen. Induces formation of bacterial clumps, which diminish the ability of group IIA phospholipase A2 to cause bacterial phospholipid hydrolysis and killing. Significantly decreases macrophage phagocytosis possibly thanks to the clumps, clumped bacteria being too large to be phagocytosed. Dominant factor responsible for human platelet aggregation, which may be an important mechanism for initiating infective endocarditis. Enhances spleen cell proliferative response in vitro, contributing significantly to the immunostimulatory activity of S.aureus. The polypeptide is Clumping factor A (clfA) (Staphylococcus aureus (strain NCTC 8325 / PS 47)).